A 325-amino-acid chain; its full sequence is Melanocortin receptor 5 (325 aa).

Topologically, residues 1-37 (MNSSFHLHFLDLNLNATEGNLSGPNVKNKSSPCEDMG) are extracellular. Residues asparagine 2, asparagine 15, asparagine 20, and asparagine 28 are each glycosylated (N-linked (GlcNAc...) asparagine). The helical transmembrane segment at 38–61 (IAVEVFLTLGVISLLENILVIGAI) threads the bilayer. Residues 62 to 73 (VKNKNLHSPMYF) are Cytoplasmic-facing. The chain crosses the membrane as a helical span at residues 74–97 (FVCSLAVADMLVSMSSAWETITIY). Over 98–114 (LLNNKHLVIADAFVRHI) the chain is Extracellular. A helical transmembrane segment spans residues 115-138 (DNVFDSMICISVVASMCSLLAIAV). The Cytoplasmic segment spans residues 139–155 (DRYVTIFYALRYHHIMT). The chain crosses the membrane as a helical span at residues 156–179 (ARRSGAIIAGIWAFCTGCGIVFIL). Residues 180–186 (YSESTYV) are Extracellular-facing. The chain crosses the membrane as a helical span at residues 187 to 211 (ILCLISMFFAMLFLLVSLYIHMFLL). Over 212 to 239 (ARTHVKRIAALPRASSARQRTSMQGAVT) the chain is Cytoplasmic. The chain crosses the membrane as a helical span at residues 240 to 265 (VTMLLGVFTVCWAPFFLHLTLMLSCP). Topologically, residues 266-273 (QNLYCSCF) are extracellular. A helical membrane pass occupies residues 274–297 (MSHFNMYLILIMCNSVMDPLIYAF). Residues 298–325 (RSQEMRKTFKEIICCRGFRIACSFPRRD) are Cytoplasmic-facing. 2 S-palmitoyl cysteine lipidation sites follow: cysteine 311 and cysteine 312.

It belongs to the G-protein coupled receptor 1 family.

It localises to the cell membrane. Its function is as follows. Receptor for MSH (alpha, beta and gamma) and ACTH. The activity of this receptor is mediated by G proteins which activate adenylate cyclase. This receptor is a possible mediator of the immunomodulation properties of melanocortins. The sequence is that of Melanocortin receptor 5 (MC5R) from Pan troglodytes (Chimpanzee).